The chain runs to 226 residues: GTP-binding nuclear protein Ran-3 (226 aa).

One can recognise a Small GTPase Ran-type domain in the interval 14–178 (GYPSFKLILV…LYLARKLTGD (165 aa)). Residue 25-32 (DGGTGKTT) participates in GTP binding. The switch-I stretch occupies residues 44–52 (KRYEPTIGV). GTP-binding positions include Gly75, 129 to 132 (NKVD), and 157 to 159 (SAK). The interval 75–91 (GQEKFGGLRDGYYIHGH) is switch-II.

Belongs to the small GTPase superfamily. Ran family. As to quaternary structure, found in a nuclear export complex with RanGTP, exportin and pre-miRNA.

The protein resides in the nucleus. Functionally, GTP-binding protein involved in nucleocytoplasmic transport. Required for the import of protein into the nucleus and also for RNA export. Involved in chromatin condensation and control of cell cycle. The sequence is that of GTP-binding nuclear protein Ran-3 (RAN3) from Oryza sativa subsp. indica (Rice).